Consider the following 247-residue polypeptide: NAD(P)H-quinone oxidoreductase subunit K, chloroplastic (247 aa).

The [4Fe-4S] cluster site is built by Cys-61, Cys-62, Cys-126, and Cys-157.

The protein belongs to the complex I 20 kDa subunit family. NDH is composed of at least 16 different subunits, 5 of which are encoded in the nucleus. Requires [4Fe-4S] cluster as cofactor.

Its subcellular location is the plastid. It localises to the chloroplast thylakoid membrane. It carries out the reaction a plastoquinone + NADH + (n+1) H(+)(in) = a plastoquinol + NAD(+) + n H(+)(out). It catalyses the reaction a plastoquinone + NADPH + (n+1) H(+)(in) = a plastoquinol + NADP(+) + n H(+)(out). NDH shuttles electrons from NAD(P)H:plastoquinone, via FMN and iron-sulfur (Fe-S) centers, to quinones in the photosynthetic chain and possibly in a chloroplast respiratory chain. The immediate electron acceptor for the enzyme in this species is believed to be plastoquinone. Couples the redox reaction to proton translocation, and thus conserves the redox energy in a proton gradient. The sequence is that of NAD(P)H-quinone oxidoreductase subunit K, chloroplastic from Anthoceros angustus (Hornwort).